The sequence spans 298 residues: Acetylglutamate kinase (298 aa).

Residues 69–70, R91, and N196 each bind substrate; that span reads GG.

The protein belongs to the acetylglutamate kinase family. ArgB subfamily.

It is found in the cytoplasm. The enzyme catalyses N-acetyl-L-glutamate + ATP = N-acetyl-L-glutamyl 5-phosphate + ADP. It participates in amino-acid biosynthesis; L-arginine biosynthesis; N(2)-acetyl-L-ornithine from L-glutamate: step 2/4. Its function is as follows. Catalyzes the ATP-dependent phosphorylation of N-acetyl-L-glutamate. This Bradyrhizobium sp. (strain BTAi1 / ATCC BAA-1182) protein is Acetylglutamate kinase.